The chain runs to 150 residues: Transcriptional repressor NrdR (150 aa).

A zinc finger spans residues 3 to 34 (CPFCGYEETKVLDSRPVSNGTSIRRRRECLQC). Positions 49–139 (IRIIKKDGRR…VYKEFRDLDS (91 aa)) constitute an ATP-cone domain.

The protein belongs to the NrdR family. The cofactor is Zn(2+).

Negatively regulates transcription of bacterial ribonucleotide reductase nrd genes and operons by binding to NrdR-boxes. This Petrotoga mobilis (strain DSM 10674 / SJ95) protein is Transcriptional repressor NrdR.